We begin with the raw amino-acid sequence, 447 residues long: Argininosuccinate synthase (447 aa).

ATP is bound by residues 17 to 25 (AFSGGLDTS) and alanine 43. Tyrosine 99 provides a ligand contact to L-citrulline. Glycine 129 and threonine 131 together coordinate ATP. Residues threonine 131, asparagine 135, and aspartate 136 each coordinate L-aspartate. Asparagine 135 serves as a coordination point for L-citrulline. An ATP-binding site is contributed by aspartate 136. L-citrulline-binding residues include arginine 139 and serine 192. Residue aspartate 194 coordinates ATP. L-citrulline is bound by residues threonine 201, glutamate 203, and glutamate 280.

The protein belongs to the argininosuccinate synthase family. Type 2 subfamily. In terms of assembly, homotetramer.

The protein resides in the cytoplasm. It carries out the reaction L-citrulline + L-aspartate + ATP = 2-(N(omega)-L-arginino)succinate + AMP + diphosphate + H(+). It functions in the pathway amino-acid biosynthesis; L-arginine biosynthesis; L-arginine from L-ornithine and carbamoyl phosphate: step 2/3. This chain is Argininosuccinate synthase, found in Salmonella agona (strain SL483).